The following is a 625-amino-acid chain: Phosphomethylpyrimidine synthase (625 aa).

Substrate contacts are provided by residues N237, M266, Y295, H331, S351–G353, D392–R395, and E431. H435 is a Zn(2+) binding site. Residue Y458 coordinates substrate. H499 contributes to the Zn(2+) binding site. [4Fe-4S] cluster contacts are provided by C579, C582, and C587.

This sequence belongs to the ThiC family. Homodimer. [4Fe-4S] cluster is required as a cofactor.

The catalysed reaction is 5-amino-1-(5-phospho-beta-D-ribosyl)imidazole + S-adenosyl-L-methionine = 4-amino-2-methyl-5-(phosphooxymethyl)pyrimidine + CO + 5'-deoxyadenosine + formate + L-methionine + 3 H(+). It participates in cofactor biosynthesis; thiamine diphosphate biosynthesis. Catalyzes the synthesis of the hydroxymethylpyrimidine phosphate (HMP-P) moiety of thiamine from aminoimidazole ribotide (AIR) in a radical S-adenosyl-L-methionine (SAM)-dependent reaction. The protein is Phosphomethylpyrimidine synthase of Cupriavidus metallidurans (strain ATCC 43123 / DSM 2839 / NBRC 102507 / CH34) (Ralstonia metallidurans).